Reading from the N-terminus, the 143-residue chain is SsrA-binding protein (143 aa).

This sequence belongs to the SmpB family.

It localises to the cytoplasm. In terms of biological role, required for rescue of stalled ribosomes mediated by trans-translation. Binds to transfer-messenger RNA (tmRNA), required for stable association of tmRNA with ribosomes. tmRNA and SmpB together mimic tRNA shape, replacing the anticodon stem-loop with SmpB. tmRNA is encoded by the ssrA gene; the 2 termini fold to resemble tRNA(Ala) and it encodes a 'tag peptide', a short internal open reading frame. During trans-translation Ala-aminoacylated tmRNA acts like a tRNA, entering the A-site of stalled ribosomes, displacing the stalled mRNA. The ribosome then switches to translate the ORF on the tmRNA; the nascent peptide is terminated with the 'tag peptide' encoded by the tmRNA and targeted for degradation. The ribosome is freed to recommence translation, which seems to be the essential function of trans-translation. The chain is SsrA-binding protein from Mycoplasmopsis synoviae (strain 53) (Mycoplasma synoviae).